A 158-amino-acid polypeptide reads, in one-letter code: Regulator of G-protein signaling 13 (158 aa).

The region spanning 34–150 (SLESLMATKY…LKSEMYQQLL (117 aa)) is the RGS domain.

Its function is as follows. Inhibits signal transduction by increasing the GTPase activity of G protein alpha subunits thereby driving them into their inactive GDP-bound form. Binds to both G(i)-alpha and G(q)-alpha. The sequence is that of Regulator of G-protein signaling 13 (Rgs13) from Mus musculus (Mouse).